A 374-amino-acid polypeptide reads, in one-letter code: Tuliposide A-converting enzyme b2, amyloplastic (374 aa).

An amyloplast-targeting transit peptide spans 1–68; it reads MSVALFCGPP…TNSSLSPSPT (68 aa). S226 functions as the Acyl-ester intermediate in the catalytic mechanism. Residues D316 and H348 each act as charge relay system in the active site.

The protein belongs to the AB hydrolase superfamily. In terms of assembly, homodimer. As to expression, highly expressed in pistil and bulb scales. Lower expression in stem, and barely detected in root, leaf, petal and stamen.

The protein localises to the plastid. It localises to the amyloplast. The catalysed reaction is 6-tuliposide A = tulipalin A + D-glucose. Its function is as follows. Lactone-forming carboxylesterases, specifically catalyzing intramolecular transesterification, but not hydrolysis. Involved in the biosynthesis of tulipalins, defensive chemicals that show antimicrobial activities against a broad range of strains of bacteria and fungi. Substrates are 6-tuliposide A &gt; 6-tuliposide B. This is Tuliposide A-converting enzyme b2, amyloplastic (TCEA-B2) from Tulipa gesneriana (Garden tulip).